The sequence spans 709 residues: Solute carrier family 15 member 1 (709 aa).

The helical transmembrane segment at 1-21 (MGMSKSRGCFGYPLSIFFIVV) threads the bilayer. Residues 22 to 53 (NEFCERFSYYGMRALLVLYFRNFLGWDDNLST) lie on the Extracellular side of the membrane. N-linked (GlcNAc...) asparagine glycosylation occurs at N50. The chain crosses the membrane as a helical span at residues 54–74 (AIYHTFVALCYLTPILGALIA). The Cytoplasmic segment spans residues 75–82 (DSWLGKFK). A helical transmembrane segment spans residues 83 to 103 (TIVSLSIVYTIGQAVISVSSI). Residues 104-118 (NDLTDHDHNGSPDSL) are Extracellular-facing. A helical transmembrane segment spans residues 119–139 (PVHVALSMVGLALIALGTGGI). Topologically, residues 140–161 (KPCVSAFGGDQFEEGQEKQRNR) are cytoplasmic. A helical transmembrane segment spans residues 162-182 (FFSIFYLAINGGSLLSTIITP). Topologically, residues 183–198 (ILRVQQCGIHSQQACY) are extracellular. Residues 199 to 219 (PLAFGVPAALMAVALIVFVLG) form a helical membrane-spanning segment. The Cytoplasmic portion of the chain corresponds to 220–276 (SGMYKKFQPQGNIMGKVAKCIGFAIKNRFRHRSKAYPKREHWLDWAKEKYDERLISQ). A helical membrane pass occupies residues 277-297 (IKMVTKVMFLYIPLPMFWALF). The Extracellular portion of the chain corresponds to 298-327 (DQQGSRWTLQATTMNGKIGAIEIQPDQMQT). The chain crosses the membrane as a helical span at residues 328-348 (VNAILIVIMVPIVDAVVYPLI). The Cytoplasmic portion of the chain corresponds to 349 to 361 (AKCGFNFTSLKKM). A helical transmembrane segment spans residues 362–382 (TVGMFLASMAFVVAAIVQVEI). Topologically, residues 383 to 585 (DKTLPVFPGG…PPNTVNMALQ (203 aa)) are extracellular. The interval 383-585 (DKTLPVFPGG…PPNTVNMALQ (203 aa)) is extracellular domain (ECD). N-linked (GlcNAc...) asparagine glycosylation is found at N406, N439, N515, and N532. A helical transmembrane segment spans residues 586–606 (IPQYFLLTCGEVVFSVTGLEF). Residues 607–620 (SYSQAPSNMKSVLQ) lie on the Cytoplasmic side of the membrane. A helical transmembrane segment spans residues 621-641 (AGWLLTVAVGNIIVLIVAGAG). Over 642-646 (HFPKQ) the chain is Extracellular. The chain crosses the membrane as a helical span at residues 647-667 (WAEYILFASLLLVVCVIFAIM). Residues 668-709 (ARFYTYINPAEIEAQFDEDEKKKGIGKENPYSSLEPVSQTNM) lie on the Cytoplasmic side of the membrane. The disordered stretch occupies residues 690 to 709 (KGIGKENPYSSLEPVSQTNM). Over residues 697–709 (PYSSLEPVSQTNM) the composition is skewed to polar residues.

The protein belongs to the major facilitator superfamily. Proton-dependent oligopeptide transporter (POT/PTR) (TC 2.A.17) family. As to quaternary structure, interacts (via extracellular domain region) with trypsin.

The protein localises to the apical cell membrane. The catalysed reaction is a dipeptide(out) + H(+)(out) = a dipeptide(in) + H(+)(in). It catalyses the reaction an L-amino acid tripeptide(out) + H(+)(out) = an L-amino acid tripeptide(in) + H(+)(in). It carries out the reaction L-alanyl-L-lysine(out) + H(+)(out) = L-alanyl-L-lysine(in) + H(+)(in). The enzyme catalyses L-alanyl-L-proline(out) + H(+)(out) = L-alanyl-L-proline(in) + H(+)(in). The catalysed reaction is L-alanyl-L-valine(out) + H(+)(out) = L-alanyl-L-valine(in) + H(+)(in). It catalyses the reaction carnosine(out) + H(+)(out) = carnosine(in) + H(+)(in). It carries out the reaction glycyl-L-glutamine(out) + H(+)(out) = glycyl-L-glutamine(in) + H(+)(in). The enzyme catalyses glycyl-L-leucine(out) + H(+)(out) = glycyl-L-leucine(in) + H(+)(in). The catalysed reaction is glycyl-L-proline(out) + H(+)(out) = glycyl-L-proline(in) + H(+)(in). It catalyses the reaction glycyl-sarcosine(out) + H(+)(out) = glycyl-sarcosine(in) + H(+)(in). It carries out the reaction L-leucyl-L-leucine(out) + H(+)(out) = L-leucyl-L-leucine(in) + H(+)(in). The enzyme catalyses L-leucyl-L-proline(out) + H(+)(out) = L-leucyl-L-proline(in) + H(+)(in). The catalysed reaction is L-phenylalanyl-L-leucine(out) + H(+)(out) = L-phenylalanyl-L-leucine(in) + H(+)(in). It catalyses the reaction L-phenylalanyl-L-phenylalanine(out) + H(+)(out) = L-phenylalanyl-L-phenylalanine(in) + H(+)(in). It carries out the reaction L-lysyl-glycine(out) + H(+)(out) = L-lysyl-glycine(in) + H(+)(in). The enzyme catalyses L-tyrosylglycine(out) + H(+)(out) = L-tyrosylglycine(in) + H(+)(in). The catalysed reaction is L-alanyl-L-aspartate(out) + 2 H(+)(out) = L-alanyl-L-aspartate(in) + 2 H(+)(in). It catalyses the reaction L-aspartyl-glycine(out) + 2 H(+)(out) = L-aspartyl-glycine(in) + 2 H(+)(in). It carries out the reaction glycyl-L-aspartate(out) + 2 H(+)(out) = glycyl-L-aspartate(in) + 2 H(+)(in). The enzyme catalyses glycyl-L-glutamate(out) + 2 H(+)(out) = glycyl-L-glutamate(in) + 2 H(+)(in). The catalysed reaction is L-alanyl-L-leucyl-L-alanine(out) + H(+)(out) = L-alanyl-L-leucyl-L-alanine(in) + H(+)(in). It catalyses the reaction L-alanyl-L-prolylglycine(out) + H(+)(out) = L-alanyl-L-prolylglycine(in) + H(+)(in). It carries out the reaction glycylglycyl-L-isoleucine(out) + H(+)(out) = glycylglycyl-L-isoleucine(in) + H(+)(in). The enzyme catalyses glycylglycyl-L-proline(out) + H(+)(out) = glycylglycyl-L-proline(in) + H(+)(in). The catalysed reaction is L-methionyl-L-phenylalanyl-L-methionine(out) + H(+)(out) = L-methionyl-L-phenylalanyl-L-methionine(in) + H(+)(in). It catalyses the reaction N-acetyl-D-muramoyl-L-alanyl-D-isoglutamine(out) + 2 H(+)(out) = N-acetyl-D-muramoyl-L-alanyl-D-isoglutamine(in) + 2 H(+)(in). It carries out the reaction N(alpha)-formyl-L-methionyl-L-leucyl-L-phenylalanine(out) + 2 H(+)(out) = N(alpha)-formyl-L-methionyl-L-leucyl-L-phenylalanine(in) + 2 H(+)(in). Functionally, electrogenic proton-coupled amino-acid transporter that transports oligopeptides of 2 to 4 amino acids with a preference for dipeptides. Transports neutral and monovalently charged peptides with a proton to peptide stoichiometry of 1:1 or 2:1. Primarily responsible for the absorption of dietary di- and tripeptides from the small intestinal lumen. Mediates transepithelial transport of muramyl and N-formylated bacterial dipeptides contributing to recognition of pathogenic bacteria by the mucosal immune system. This chain is Solute carrier family 15 member 1, found in Mus musculus (Mouse).